Consider the following 173-residue polypeptide: Thiol-disulfide oxidoreductase ResA (173 aa).

A helical; Signal-anchor for type II membrane protein membrane pass occupies residues 10-29; it reads VIILLILCGAVGFTLYQGYF. In terms of domain architecture, Thioredoxin spans 35–173; the sequence is MEIGKEAPNF…LEEYLKKITP (139 aa). Cys-73 and Cys-76 are joined by a disulfide.

This sequence belongs to the thioredoxin family. ResA subfamily.

It localises to the cell membrane. It functions in the pathway protein modification; cytochrome c assembly. In terms of biological role, thiol-disulfide oxidoreductase which is required in disulfide reduction during c-type cytochrome synthesis. May accept reducing equivalents from CcdA, leading to breakage of disulfide bonds in apocytochrome c; following this reduction heme can be covalently attached. The protein is Thiol-disulfide oxidoreductase ResA of Bacillus thuringiensis subsp. konkukian (strain 97-27).